We begin with the raw amino-acid sequence, 173 residues long: Protein FAM180A (173 aa).

A signal peptide spans M1–A17.

Belongs to the FAM180 family.

The protein localises to the secreted. The protein is Protein FAM180A (FAM180A) of Homo sapiens (Human).